The primary structure comprises 246 residues: Heavy metal-associated isoprenylated plant protein 8 (246 aa).

Positions 1-31 (MGKNKQNGESDNKSEKKNQKNGDSSVDKSDK) are disordered. In terms of domain architecture, HMA 1 spans 35–99 (CKEIVLKVYM…RVQKKFSRNA (65 aa)). Positions 46 and 49 each coordinate a metal cation. Positions 96–122 (SRNAEMISPKHNPKQDQKEPQQKKESA) are disordered. Over residues 108–122 (PKQDQKEPQQKKESA) the composition is skewed to basic and acidic residues. An HMA 2 domain is found at 125–189 (IKTAILRMNM…IKKKLGKHAE (65 aa)). 2 residues coordinate a metal cation: Cys-136 and Cys-139. Residues 191–226 (LSQITEKGKDNNKKNNNKKEESDGNKIFSYPPQYSS) form a disordered region. A compositionally biased stretch (basic and acidic residues) spans 196–214 (EKGKDNNKKNNNKKEESDG). Cys-243 carries the post-translational modification Cysteine methyl ester. A lipid anchor (S-farnesyl cysteine) is attached at Cys-243. A propeptide spans 244–246 (SIM) (removed in mature form).

It belongs to the HIPP family.

In terms of biological role, heavy-metal-binding protein. The chain is Heavy metal-associated isoprenylated plant protein 8 from Arabidopsis thaliana (Mouse-ear cress).